Reading from the N-terminus, the 297-residue chain is L-threonate dehydrogenase (297 aa).

NAD(+)-binding positions include 3 to 31 (RNIG…VHAC) and threonine 97. The active site involves lysine 173. An NAD(+)-binding site is contributed by lysine 241.

It belongs to the HIBADH-related family. L-threonate dehydrogenase subfamily.

The enzyme catalyses L-threonate + NAD(+) = 2-dehydro-L-erythronate + NADH + H(+). Its function is as follows. Catalyzes oxidation of L-threonate to 2-oxo-tetronate. Can use either NAD(+) or NADP(+) as cosubstrate, with a preference for NAD(+). This Cupriavidus necator (strain ATCC 17699 / DSM 428 / KCTC 22496 / NCIMB 10442 / H16 / Stanier 337) (Ralstonia eutropha) protein is L-threonate dehydrogenase.